Consider the following 964-residue polypeptide: uncharacterized protein (964 aa).

Disordered stretches follow at residues 1–31 and 169–199; these read MDSETDTDTHSICNSVSSGENYKSPESSDCE and EETYSEEDERQTPIQMENATSEVSSSEDEIS. The segment covering 10 to 27 has biased composition (polar residues); it reads HSICNSVSSGENYKSPES. A coiled-coil region spans residues 656 to 840; sequence EVMESLQVEI…LILNQTSMAK (185 aa).

This is an uncharacterized protein from Caenorhabditis elegans.